Reading from the N-terminus, the 358-residue chain is Acyl-CoA desaturase 1 (358 aa).

At 1-71 the chain is on the cytoplasmic side; sequence MPAHMLQEIS…EGPPPKLEYV (71 aa). Positions 8 to 24 are enriched in low complexity; sequence EISSSYTTTTTITEPPS. Residues 8–33 form a disordered region; the sequence is EISSSYTTTTTITEPPSGNLQNGREK. A helical membrane pass occupies residues 72–92; that stretch reads WRNIILMALLHVGALYGITLI. Asparagine 74 contacts substrate. Residues 93–96 are Lumenal-facing; the sequence is PSSK. The helical transmembrane segment at 97–117 threads the bilayer; the sequence is VYTLLWGIFYYLISALGITAG. At 118–216 the chain is on the cytoplasmic side; the sequence is AHRLWSHRTY…EKLVMFQRRY (99 aa). 2 residues coordinate Fe cation: histidine 119 and histidine 124. Positions 119 to 124 match the Histidine box-1 motif; the sequence is HRLWSH. Asparagine 147, arginine 154, and aspartate 155 together coordinate substrate. Residues histidine 156, histidine 159, and histidine 160 each contribute to the Fe cation site. Residues 156-160 carry the Histidine box-2 motif; the sequence is HRAHH. Residues arginine 187 and lysine 188 each coordinate substrate. A helical membrane pass occupies residues 217–236; it reads YKPGLLLMCFILPTLVPWYC. The Lumenal portion of the chain corresponds to 237–240; the sequence is WGET. Residues 241-262 form a helical membrane-spanning segment; that stretch reads FLHSLFVSTFLRYTLVLNATWL. Tryptophan 261 serves as a coordination point for substrate. Over 263-358 the chain is Cytoplasmic; sequence VNSAAHLYGY…RTGDGSHKSS (96 aa). Residues histidine 268, histidine 297, histidine 300, and histidine 301 each contribute to the Fe cation site. The short motif at 297-301 is the Histidine box-3 element; that stretch reads HNYHH.

Belongs to the fatty acid desaturase type 1 family. The cofactor is Fe(2+). In terms of tissue distribution, detected in liver (at protein level). Detected in adipose tissue. Detected in liver when rats are kept on a fat-free diet, but not when their food contains unsaturated fatty acids.

It is found in the endoplasmic reticulum membrane. The protein localises to the membrane. The enzyme catalyses octadecanoyl-CoA + 2 Fe(II)-[cytochrome b5] + O2 + 2 H(+) = (9Z)-octadecenoyl-CoA + 2 Fe(III)-[cytochrome b5] + 2 H2O. Stearoyl-CoA desaturase that utilizes O(2) and electrons from reduced cytochrome b5 to introduce the first double bond into saturated fatty acyl-CoA substrates. Catalyzes the insertion of a cis double bond at the Delta-9 position into fatty acyl-CoA substrates including palmitoyl-CoA and stearoyl-CoA. Gives rise to a mixture of 16:1 and 18:1 unsaturated fatty acids. Plays an important role in lipid biosynthesis. Plays an important role in regulating the expression of genes that are involved in lipogenesis and in regulating mitochondrial fatty acid oxidation. Plays an important role in body energy homeostasis. Contributes to the biosynthesis of membrane phospholipids, cholesterol esters and triglycerides. Required for normal development of sebaceous glands. Required for the biosynthesis of normal levels of Delta-9 unsaturated fatty acids and 1-alkyl-2,3-diacylglycerol in the Harderian gland. Required for normal production of meibum, an oily material that prevents drying of the cornea. The polypeptide is Acyl-CoA desaturase 1 (Scd1) (Rattus norvegicus (Rat)).